The primary structure comprises 218 residues: MNLQNNKGKFNKEQFCQLEDEQVIEKVHVGDSDALDYLITKYRNFVRAKARSYFLIGADREDIVQEGMIGLYKSIRDFKEDKLTSFKAFAELCITRQIITAIKTATRQKHIPLNSYASLDKPIFDEESDRTLLDVISGAKTLNPEEMIINQEEFDDIEMKMGELLSDLERKVLVLYLDGRSYQEISDELNRHVKSIDNALQRVKRKLEKYLEIREISL.

Residues 62-75 carry the Polymerase core binding motif; it reads DIVQEGMIGLYKSI. Residues 182-201 constitute a DNA-binding region (H-T-H motif); the sequence is YQEISDELNRHVKSIDNALQ.

Belongs to the sigma-70 factor family. As to quaternary structure, interacts transiently with the RNAP core.

In terms of biological role, sigma factors are initiation factors that promote the attachment of RNA polymerase (RNAP) to specific initiation sites and are then released. This sigma factor is involved in the transition to post-exponential phase in the beginning of sporulation. It is also required for transcription of several stationary phase genes. Association with the RNAP core increases rapidly in early exponential phase, and reamins constant expression level after. The polypeptide is RNA polymerase sigma-H factor (sigH) (Bacillus subtilis (strain 168)).